A 103-amino-acid polypeptide reads, in one-letter code: Small ribosomal subunit protein uS14c (103 aa).

The segment at 34–56 (KVSPLSLSEKTKMREKLQSLPRN) is disordered.

The protein belongs to the universal ribosomal protein uS14 family. In terms of assembly, part of the 30S ribosomal subunit.

It is found in the plastid. Its subcellular location is the chloroplast. In terms of biological role, binds 16S rRNA, required for the assembly of 30S particles. The chain is Small ribosomal subunit protein uS14c from Brachypodium distachyon (Purple false brome).